The primary structure comprises 150 residues: MEVILLEKVANLGDLGDRVKVRPGYGRNYLVPQGKAKPATKENIRYFEERRAELERQAQEALAAAEARKEQLEGLTVTISAKSGEEGKLFGSVGTQDVADAITAAGVEVARREVRMPEGPIRVTGEYELELGLHTDVTALVKVVVQSQEA.

Belongs to the bacterial ribosomal protein bL9 family.

Functionally, binds to the 23S rRNA. The sequence is that of Large ribosomal subunit protein bL9 from Alkalilimnicola ehrlichii (strain ATCC BAA-1101 / DSM 17681 / MLHE-1).